The following is a 798-amino-acid chain: Nuclear intron maturase 4, mitochondrial (798 aa).

Residues Met1–Tyr16 constitute a mitochondrion transit peptide. Positions Val578 to Glu665 are intron maturase type-2. Residues Cys729 to His778 form a THAP-type zinc finger.

Belongs to the plant nuclear intron maturase (nMat) family.

The protein localises to the mitochondrion. Its subcellular location is the plastid. The protein resides in the chloroplast. Nuclear-encoded maturase required for splicing of group-II introns in mitochondria. Involved in NAD1 pre-mRNA processing and maturation of introns 1, 3 and 4. Necessary for mitochondrial biogenesis during early developmental stages. Essential for respiratory holocomplex I biogenesis in mitochondria. In Arabidopsis thaliana (Mouse-ear cress), this protein is Nuclear intron maturase 4, mitochondrial.